The sequence spans 440 residues: Na(+)/H(+) antiporter NhaA (440 aa).

The next 11 helical transmembrane spans lie at 25-45 (FLHIEATSGLVLILCTVVALV), 76-96 (LHHVINDGLMAVFFFVIGLEV), 112-132 (TLPIAAAIGGMIVPATLYLSM), 141-161 (GWGIPMATDIAFVVGCLAILG), 170-190 (VLLLSLAIVDDIGAILVIAIG), 194-214 (SLDGRYLFLAAVAVGAVHFLS), 225-245 (VIVGVLAWIALHESGIHATLI), 312-332 (HPWTAYVIMPVFALANAGVLI), 345-365 (VVIGLVVGKPLGIALFSWLVI), 378-398 (WPILMSGSFLAGIGFTMALFI), and 414-434 (GVLVGSAISAIAGMGLLLWTL).

It belongs to the NhaA Na(+)/H(+) (TC 2.A.33) antiporter family.

Its subcellular location is the cell inner membrane. The enzyme catalyses Na(+)(in) + 2 H(+)(out) = Na(+)(out) + 2 H(+)(in). Na(+)/H(+) antiporter that extrudes sodium in exchange for external protons. This chain is Na(+)/H(+) antiporter NhaA, found in Rhodopirellula baltica (strain DSM 10527 / NCIMB 13988 / SH1).